Here is a 428-residue protein sequence, read N- to C-terminus: 3-phosphoshikimate 1-carboxyvinyltransferase (428 aa).

Residues Lys21, Ser22, and Arg26 each coordinate 3-phosphoshikimate. Residue Lys21 coordinates phosphoenolpyruvate. Residues Gly91 and Arg119 each contribute to the phosphoenolpyruvate site. Ser164, Gln166, Asp313, and Lys340 together coordinate 3-phosphoshikimate. Gln166 provides a ligand contact to phosphoenolpyruvate. The Proton acceptor role is filled by Asp313. Positions 344 and 386 each coordinate phosphoenolpyruvate.

It belongs to the EPSP synthase family. As to quaternary structure, monomer.

The protein localises to the cytoplasm. The enzyme catalyses 3-phosphoshikimate + phosphoenolpyruvate = 5-O-(1-carboxyvinyl)-3-phosphoshikimate + phosphate. It participates in metabolic intermediate biosynthesis; chorismate biosynthesis; chorismate from D-erythrose 4-phosphate and phosphoenolpyruvate: step 6/7. In terms of biological role, catalyzes the transfer of the enolpyruvyl moiety of phosphoenolpyruvate (PEP) to the 5-hydroxyl of shikimate-3-phosphate (S3P) to produce enolpyruvyl shikimate-3-phosphate and inorganic phosphate. The polypeptide is 3-phosphoshikimate 1-carboxyvinyltransferase (Campylobacter jejuni subsp. jejuni serotype O:23/36 (strain 81-176)).